The primary structure comprises 193 residues: Putative manganese efflux pump MntP (193 aa).

Transmembrane regions (helical) follow at residues 6-26 (VIFI…GIAC), 48-68 (AGMV…ISAF), 71-91 (WIAF…ALQG), 108-128 (LLGV…AFAV), 132-152 (NIGL…FLGF), and 165-185 (WVGV…LAEH).

This sequence belongs to the MntP (TC 9.B.29) family.

Its subcellular location is the cell membrane. Its function is as follows. Probably functions as a manganese efflux pump. The sequence is that of Putative manganese efflux pump MntP from Dehalococcoides mccartyi (strain ATCC BAA-2100 / JCM 16839 / KCTC 5957 / BAV1).